A 434-amino-acid polypeptide reads, in one-letter code: Alpha-enolase (434 aa).

At serine 2 the chain carries N-acetylserine. Lysine 5 carries the post-translational modification N6-acetyllysine. Serine 27 bears the Phosphoserine mark. Residues 31-38 (FRAAVPSG) form an epitope recognized by CAR and healthy patient antibodies region. Serine 40 contributes to the Mg(2+) binding site. The residue at position 44 (tyrosine 44) is a Phosphotyrosine. The interval 56–63 (RYMGKGVS) is epitope recognized by CAR antibodies. At lysine 60 the chain carries N6-acetyllysine; alternate. Position 60 is an N6-succinyllysine; alternate (lysine 60). Residues lysine 64 and lysine 71 each carry the N6-acetyllysine modification. Lysine 89 carries the N6-acetyllysine; alternate modification. Lysine 89 is modified (N6-succinyllysine; alternate). An N6-acetyllysine mark is found at lysine 92 and lysine 126. A required for repression of c-myc promoter activity region spans residues 97-237 (MDGTENKSKF…KTAIGKAGYT (141 aa)). Residues histidine 158 and glutamate 167 each contribute to the substrate site. N6-acetyllysine is present on residues lysine 193 and lysine 199. Residue lysine 202 is modified to N6-acetyllysine; alternate. Lysine 202 is covalently cross-linked (Glycyl lysine isopeptide (Lys-Gly) (interchain with G-Cter in SUMO2); alternate). Glutamate 210 serves as the catalytic Proton donor. Lysine 228 and lysine 233 each carry N6-acetyllysine; alternate. N6-succinyllysine; alternate is present on lysine 228. Lysine 228 is modified (N6-(2-hydroxyisobutyryl)lysine; alternate). Residue lysine 233 is modified to N6-malonyllysine; alternate. Aspartate 245 serves as a coordination point for Mg(2+). At serine 254 the chain carries Phosphoserine. The residue at position 256 (lysine 256) is an N6-acetyllysine. Serine 263 and serine 272 each carry phosphoserine. At lysine 281 the chain carries N6-acetyllysine; alternate. An N6-(2-hydroxyisobutyryl)lysine; alternate modification is found at lysine 281. N6-acetyllysine is present on lysine 285. Tyrosine 287 is modified (phosphotyrosine). The residue at position 291 (serine 291) is a Phosphoserine. The Mg(2+) site is built by glutamate 293 and aspartate 318. Substrate contacts are provided by glutamate 293 and aspartate 318. 2 positions are modified to N6-acetyllysine: lysine 335 and lysine 343. The active-site Proton acceptor is lysine 343. Residues 370–373 (SHRS) and lysine 394 each bind substrate. The required for interaction with PLG stretch occupies residues 405–434 (AKYNQLLRIEEELGSKAKFAGRNFRNPLAK). Residue lysine 406 is modified to N6-acetyllysine. At lysine 420 the chain carries N6-acetyllysine; alternate. Position 420 is an N6-succinyllysine; alternate (lysine 420). Lysine 420 carries the N6-malonyllysine; alternate modification.

Belongs to the enolase family. Mammalian enolase is composed of 3 isozyme subunits, alpha, beta and gamma, which can form homodimers or heterodimers which are cell-type and development-specific. ENO1 interacts with PLG in the neuronal plasma membrane and promotes its activation. The C-terminal lysine is required for this binding. Isoform MBP-1 interacts with TRAPPC2B. Interacts with ENO4 and PGAM2. Interacts with CMTM6. Mg(2+) serves as cofactor. In terms of processing, ISGylated. Post-translationally, lysine 2-hydroxyisobutyrylation (Khib) by p300/EP300 activates the phosphopyruvate hydratase activity. The alpha/alpha homodimer is expressed in embryo and in most adult tissues. The alpha/beta heterodimer and the beta/beta homodimer are found in striated muscle, and the alpha/gamma heterodimer and the gamma/gamma homodimer in neurons.

The protein localises to the cytoplasm. It is found in the cell membrane. The protein resides in the myofibril. Its subcellular location is the sarcomere. It localises to the m line. The protein localises to the nucleus. It catalyses the reaction (2R)-2-phosphoglycerate = phosphoenolpyruvate + H2O. The protein operates within carbohydrate degradation; glycolysis; pyruvate from D-glyceraldehyde 3-phosphate: step 4/5. Glycolytic enzyme the catalyzes the conversion of 2-phosphoglycerate to phosphoenolpyruvate. In addition to glycolysis, involved in various processes such as growth control, hypoxia tolerance and allergic responses. May also function in the intravascular and pericellular fibrinolytic system due to its ability to serve as a receptor and activator of plasminogen on the cell surface of several cell-types such as leukocytes and neurons. Stimulates immunoglobulin production. In terms of biological role, binds to the myc promoter and acts as a transcriptional repressor. May be a tumor suppressor. This Homo sapiens (Human) protein is Alpha-enolase (ENO1).